Here is a 92-residue protein sequence, read N- to C-terminus: Small ribosomal subunit protein uS19 (92 aa).

It belongs to the universal ribosomal protein uS19 family.

Functionally, protein S19 forms a complex with S13 that binds strongly to the 16S ribosomal RNA. This Shigella boydii serotype 18 (strain CDC 3083-94 / BS512) protein is Small ribosomal subunit protein uS19.